A 286-amino-acid polypeptide reads, in one-letter code: Bifunctional protein FolD (286 aa).

NADP(+) is bound by residues 165–167 (GRS), S190, and V231.

It belongs to the tetrahydrofolate dehydrogenase/cyclohydrolase family. As to quaternary structure, homodimer.

It carries out the reaction (6R)-5,10-methylene-5,6,7,8-tetrahydrofolate + NADP(+) = (6R)-5,10-methenyltetrahydrofolate + NADPH. The enzyme catalyses (6R)-5,10-methenyltetrahydrofolate + H2O = (6R)-10-formyltetrahydrofolate + H(+). The protein operates within one-carbon metabolism; tetrahydrofolate interconversion. In terms of biological role, catalyzes the oxidation of 5,10-methylenetetrahydrofolate to 5,10-methenyltetrahydrofolate and then the hydrolysis of 5,10-methenyltetrahydrofolate to 10-formyltetrahydrofolate. This chain is Bifunctional protein FolD, found in Bacillus cereus (strain ZK / E33L).